Here is a 356-residue protein sequence, read N- to C-terminus: 16-methoxy-2,3-dihydro-3-hydroxytabersonine synthase (356 aa).

The Zn(2+) site is built by cysteine 49, histidine 71, cysteine 102, cysteine 105, cysteine 108, cysteine 116, and cysteine 162. NAD(+) is bound at residue 187 to 192; it reads GLGAVG.

The protein belongs to the zinc-containing alcohol dehydrogenase family. It depends on Zn(2+) as a cofactor. In terms of tissue distribution, expressed in leaf epidermis.

It catalyses the reaction (3R)-3-hydroxy-16-methoxy-2,3-dihydrotabersonine + A = (3R)-1,2-didehydro-3-hydroxy-16-methoxy-2,3-dihydrotabersonine + AH2. The enzyme catalyses (3R)-3-hydroxy-2,3-dihydrotabersonine + A = (3R)-1,2-didehydro-3-hydroxy-2,3-dihydrotabersonine + AH2. It participates in alkaloid biosynthesis; vindoline biosynthesis. Converts the unstable imine alcohols produced by CYP71D1V2/T3O into 3-hydroxy-16-methoxy-2,3-dihydrotabersonine or 3-hydroxy-2,3-dihydrotabersonine. This Catharanthus roseus (Madagascar periwinkle) protein is 16-methoxy-2,3-dihydro-3-hydroxytabersonine synthase.